A 1151-amino-acid chain; its full sequence is Trafficking protein particle complex subunit 9 (1151 aa).

Belongs to the NIBP family. Part of the multisubunit TRAPP (transport protein particle) complex.

The protein localises to the golgi apparatus. Its subcellular location is the cis-Golgi network. The protein resides in the endoplasmic reticulum. It localises to the cytoplasm. In terms of biological role, functions as an activator of NF-kappa-B through increased phosphorylation of the IKK complex. May function in neuronal cells differentiation. May play a role in vesicular transport from endoplasmic reticulum to Golgi. The polypeptide is Trafficking protein particle complex subunit 9 (trappc9) (Xenopus laevis (African clawed frog)).